The sequence spans 1383 residues: DNA-directed RNA polymerase subunit beta (1383 aa).

The protein belongs to the RNA polymerase beta chain family. The RNAP catalytic core consists of 2 alpha, 1 beta, 1 beta' and 1 omega subunit. When a sigma factor is associated with the core the holoenzyme is formed, which can initiate transcription.

The catalysed reaction is RNA(n) + a ribonucleoside 5'-triphosphate = RNA(n+1) + diphosphate. In terms of biological role, DNA-dependent RNA polymerase catalyzes the transcription of DNA into RNA using the four ribonucleoside triphosphates as substrates. This is DNA-directed RNA polymerase subunit beta from Bartonella bacilliformis (strain ATCC 35685 / KC583 / Herrer 020/F12,63).